We begin with the raw amino-acid sequence, 85 residues long: Cell division topological specificity factor (85 aa).

Belongs to the MinE family.

In terms of biological role, prevents the cell division inhibition by proteins MinC and MinD at internal division sites while permitting inhibition at polar sites. This ensures cell division at the proper site by restricting the formation of a division septum at the midpoint of the long axis of the cell. This is Cell division topological specificity factor from Deinococcus geothermalis (strain DSM 11300 / CIP 105573 / AG-3a).